The following is a 370-amino-acid chain: F-box protein At1g66490 (370 aa).

The F-box domain maps to 1–46 (MRTISDLPVALVEEILSRVPLTSLSAVRSTCKTWNALSKTQIFGKT).

The protein is F-box protein At1g66490 of Arabidopsis thaliana (Mouse-ear cress).